Here is a 418-residue protein sequence, read N- to C-terminus: Serine proteinase inhibitor 2.4 (418 aa).

The signal sequence occupies residues 1 to 28; it reads MAFIAALGIFMAGICPAVLCFPNGTLGR. Residues N23, N38, N104, and N269 are each glycosylated (N-linked (GlcNAc...) asparagine).

The protein belongs to the serpin family.

It localises to the secreted. The polypeptide is Serine proteinase inhibitor 2.4 (Apodemus sylvaticus (European woodmouse)).